Here is a 243-residue protein sequence, read N- to C-terminus: uncharacterized protein (243 aa).

One can recognise a VWFA domain in the interval 26–204 (RVGLVLDITG…ISDDELYDAL (179 aa)). The interval 222 to 243 (REQEPPAEKPKKKGFFSRLFSK) is disordered. The span at 231 to 243 (PKKKGFFSRLFSK) shows a compositional bias: basic residues.

This is an uncharacterized protein from Bacillus subtilis (strain 168).